A 343-amino-acid polypeptide reads, in one-letter code: Phosphoglycerate mutase-like protein 2 (343 aa).

A chloroplast-targeting transit peptide spans 1–35 (MIHQSMTSNLSFYISSVSHLSSPLPSLSRLSLRCC). The Tele-phosphohistidine intermediate role is filled by His65. The Proton donor/acceptor role is filled by Glu177. The segment at 322-343 (MTNYPGTILTGEDASSDIADQK) is disordered.

It belongs to the phosphoglycerate mutase family.

It localises to the plastid. Its subcellular location is the chloroplast. In terms of biological role, may play a role in carbohydrates metabolism. This is Phosphoglycerate mutase-like protein 2 from Arabidopsis thaliana (Mouse-ear cress).